The chain runs to 100 residues: MELTPREKDKLLIFTAALLAERRKARGLKLNYPEAVALITAAIMEGARDGRTVAELMHEGTTVLTREDVMDGIAEMIPEIQVEATFPDGTKLVTVHHPIV.

This sequence belongs to the urease gamma subunit family. Heterotrimer of UreA (gamma), UreB (beta) and UreC (alpha) subunits. Three heterotrimers associate to form the active enzyme.

It localises to the cytoplasm. It catalyses the reaction urea + 2 H2O + H(+) = hydrogencarbonate + 2 NH4(+). The protein operates within nitrogen metabolism; urea degradation; CO(2) and NH(3) from urea (urease route): step 1/1. The sequence is that of Urease subunit gamma from Cupriavidus taiwanensis (strain DSM 17343 / BCRC 17206 / CCUG 44338 / CIP 107171 / LMG 19424 / R1) (Ralstonia taiwanensis (strain LMG 19424)).